Reading from the N-terminus, the 100-residue chain is Small ribosomal subunit protein uS14c (100 aa).

Belongs to the universal ribosomal protein uS14 family. Part of the 30S ribosomal subunit.

It is found in the plastid. It localises to the chloroplast. In terms of biological role, binds 16S rRNA, required for the assembly of 30S particles. The chain is Small ribosomal subunit protein uS14c from Chlamydomonas reinhardtii (Chlamydomonas smithii).